The sequence spans 186 residues: Elongation factor P (186 aa).

It belongs to the elongation factor P family.

It localises to the cytoplasm. Its pathway is protein biosynthesis; polypeptide chain elongation. Its function is as follows. Involved in peptide bond synthesis. Stimulates efficient translation and peptide-bond synthesis on native or reconstituted 70S ribosomes in vitro. Probably functions indirectly by altering the affinity of the ribosome for aminoacyl-tRNA, thus increasing their reactivity as acceptors for peptidyl transferase. The polypeptide is Elongation factor P (Pelagibacter ubique (strain HTCC1062)).